The chain runs to 91 residues: Late embryogenis abundant protein 2 (91 aa).

Residues 47–72 (KRAGEASSEKAPWVPDPKTGYYRPET) form a disordered region.

It belongs to the LEA type 3 family.

It localises to the cytoplasm. It is found in the nucleus. In Arabidopsis thaliana (Mouse-ear cress), this protein is Late embryogenis abundant protein 2.